A 400-amino-acid chain; its full sequence is Large envelope protein (400 aa).

The residue at position 1 (Met-1) is an N-acetylmethionine. A lipid anchor (N-myristoyl glycine; by host) is attached at Gly-2. A pre-S1 region spans residues 2–119 (GAPLSTARRG…PPLRDTHPQA (118 aa)). A pre-S region spans residues 2-174 (GAPLSTARRG…FSKTGDPAMN (173 aa)). Topologically, residues 2–181 (GAPLSTARRG…AMNMENITSG (180 aa)) are virion surface; in external conformation. Residues 2–253 (GAPLSTARRG…PGYRWMCLRR (252 aa)) are Intravirion; in internal conformation-facing. Pro-4 carries N-linked (GlcNAc...) asparagine glycosylation. The interval 70–115 (PHGGLLGWSPQAQGILTTSPPDPPPASTNRRSGRKPTPVSPPLRDT) is disordered. The segment covering 79 to 88 (PQAQGILTTS) has biased composition (polar residues). The tract at residues 120 to 174 (MQWNSTQFHQALLDPRVRGLYLPAGGSSSETQNPVPTIASLTSSIFSKTGDPAMN) is pre-S2. The helical transmembrane segment at 182-202 (LLGPLLVLQAVCFLLTKILTI) threads the bilayer. Over 203-253 (PQSLDSWWTSLNFLGVPPGCPGQNSQSPISNHLPTSCPPTCPGYRWMCLRR) the chain is Intravirion; in external conformation. Residues 254–274 (FIIFLFILLLCLIFLLVLLDY) form a helical membrane-spanning segment. Residues 275 to 348 (QGMLPVCPLL…WASARFSWLS (74 aa)) lie on the Virion surface side of the membrane. N-linked (GlcNAc...) asparagine; by host glycosylation occurs at Asn-320. A helical membrane pass occupies residues 349–369 (LLVQFVQWCVGLSPTVWLLVI). Residues 370–375 (WMIWYW) lie on the Intravirion side of the membrane. Residues 376–398 (GPNLCSILSPFIPLLPIFCYLWA) form a helical membrane-spanning segment. The Virion surface portion of the chain corresponds to 399–400 (SI).

This sequence belongs to the orthohepadnavirus major surface antigen family. In its internal form (Li-HBsAg), interacts with the capsid protein and with the isoform S. Interacts with host chaperone CANX. In terms of assembly, associates with host chaperone CANX through its pre-S2 N glycan; this association may be essential for isoform M proper secretion. As to quaternary structure, interacts with isoform L. Interacts with the antigens of satellite virus HDV (HDVAgs); this interaction is required for encapsidation of HDV genomic RNA. In terms of processing, isoform M is N-terminally acetylated by host at a ratio of 90%, and N-glycosylated by host at the pre-S2 region. Post-translationally, myristoylated.

The protein localises to the virion membrane. Its function is as follows. The large envelope protein exists in two topological conformations, one which is termed 'external' or Le-HBsAg and the other 'internal' or Li-HBsAg. In its external conformation the protein attaches the virus to cell receptors and thereby initiating infection. This interaction determines the species specificity and liver tropism. This attachment induces virion internalization predominantly through caveolin-mediated endocytosis. The large envelope protein also assures fusion between virion membrane and endosomal membrane. In its internal conformation the protein plays a role in virion morphogenesis and mediates the contact with the nucleocapsid like a matrix protein. In terms of biological role, the middle envelope protein plays an important role in the budding of the virion. It is involved in the induction of budding in a nucleocapsid independent way. In this process the majority of envelope proteins bud to form subviral lipoprotein particles of 22 nm of diameter that do not contain a nucleocapsid. This is Large envelope protein from Hepatitis B virus genotype H subtype adw4 (isolate Nicaragua/2928Nic/1997) (HBV-H).